The sequence spans 447 residues: ATP-dependent protease ATPase subunit HslU (447 aa).

Residues Ile18, 60–65 (GVGKTE), Asp259, Glu325, and Arg397 each bind ATP.

Belongs to the ClpX chaperone family. HslU subfamily. As to quaternary structure, a double ring-shaped homohexamer of HslV is capped on each side by a ring-shaped HslU homohexamer. The assembly of the HslU/HslV complex is dependent on binding of ATP.

The protein localises to the cytoplasm. ATPase subunit of a proteasome-like degradation complex; this subunit has chaperone activity. The binding of ATP and its subsequent hydrolysis by HslU are essential for unfolding of protein substrates subsequently hydrolyzed by HslV. HslU recognizes the N-terminal part of its protein substrates and unfolds these before they are guided to HslV for hydrolysis. The protein is ATP-dependent protease ATPase subunit HslU of Burkholderia pseudomallei (strain K96243).